The sequence spans 263 residues: Probable ABC transporter permease protein slr1045 (263 aa).

A run of 7 helical transmembrane segments spans residues 12 to 32, 52 to 72, 97 to 117, 140 to 162, 167 to 186, 192 to 212, and 234 to 254; these read LWFQRLVAAFFLTGQVFLHIL, SMAIALITAGFVGMVFTIQVA, APVLTAVVIAGRVGSAFAAEI, LVVPRVIACGLMLPILTGLSLFV, GLVISSSLYAINPTIFLNSV, LWDVFACLFKSLVFGVIIAII, and AVVTSLLAIFISNFFLSWLMF.

Belongs to the MlaE permease family.

It is found in the cell membrane. Could be part of an ABC transporter complex. In Synechocystis sp. (strain ATCC 27184 / PCC 6803 / Kazusa), this protein is Probable ABC transporter permease protein slr1045.